Here is a 255-residue protein sequence, read N- to C-terminus: Tryptophan synthase alpha chain (255 aa).

Active-site proton acceptor residues include Glu51 and Asp62.

The protein belongs to the TrpA family. Tetramer of two alpha and two beta chains.

It carries out the reaction (1S,2R)-1-C-(indol-3-yl)glycerol 3-phosphate + L-serine = D-glyceraldehyde 3-phosphate + L-tryptophan + H2O. The protein operates within amino-acid biosynthesis; L-tryptophan biosynthesis; L-tryptophan from chorismate: step 5/5. Its function is as follows. The alpha subunit is responsible for the aldol cleavage of indoleglycerol phosphate to indole and glyceraldehyde 3-phosphate. The protein is Tryptophan synthase alpha chain of Maridesulfovibrio salexigens (strain ATCC 14822 / DSM 2638 / NCIMB 8403 / VKM B-1763) (Desulfovibrio salexigens).